We begin with the raw amino-acid sequence, 572 residues long: Proline--tRNA ligase (572 aa).

This sequence belongs to the class-II aminoacyl-tRNA synthetase family. ProS type 1 subfamily. In terms of assembly, homodimer.

The protein resides in the cytoplasm. The enzyme catalyses tRNA(Pro) + L-proline + ATP = L-prolyl-tRNA(Pro) + AMP + diphosphate. In terms of biological role, catalyzes the attachment of proline to tRNA(Pro) in a two-step reaction: proline is first activated by ATP to form Pro-AMP and then transferred to the acceptor end of tRNA(Pro). As ProRS can inadvertently accommodate and process non-cognate amino acids such as alanine and cysteine, to avoid such errors it has two additional distinct editing activities against alanine. One activity is designated as 'pretransfer' editing and involves the tRNA(Pro)-independent hydrolysis of activated Ala-AMP. The other activity is designated 'posttransfer' editing and involves deacylation of mischarged Ala-tRNA(Pro). The misacylated Cys-tRNA(Pro) is not edited by ProRS. The protein is Proline--tRNA ligase of Edwardsiella ictaluri (strain 93-146).